The primary structure comprises 706 residues: Dual specificity calcium/calmodulin-dependent 3',5'-cyclic nucleotide phosphodiesterase 1C (706 aa).

An N-acetylmethionine modification is found at Met-1. Residues 123–146 (EKPRFKSIVHAVQAGIFVERMYRR) are calmodulin-binding. Residues 151–528 (VGLSYPPAVI…ERWRAKVPKE (378 aa)) form the PDEase domain. His-228 (proton donor) is an active-site residue. 4 residues coordinate Zn(2+): His-232, His-268, Asp-269, and Asp-376. A Mg(2+)-binding site is contributed by Asp-269. Disordered stretches follow at residues 453 to 497 (LIDE…INNS) and 524 to 655 (KVPK…IKPP). Composition is skewed to polar residues over residues 456–476 (ESSQTGGTGQRRSSLNSINSS) and 483–497 (VKSSGSDGSAPINNS). 3 stretches are compositionally biased toward basic and acidic residues: residues 524 to 554 (KVPKEEKAKKEAEEKARLAAEEKQKEMEAKS), 580 to 597 (RKGDNPRGKNSKGEKAGE), and 603 to 630 (DLKDGKNKADKKDHSNTGNESKKTDGTK). Residues 638 to 647 (APSTSSTSRI) show a composition bias toward polar residues.

Belongs to the cyclic nucleotide phosphodiesterase family. PDE1 subfamily. In terms of assembly, homodimer. It depends on Zn(2+) as a cofactor. The cofactor is Mg(2+). As to expression, highly expressed in testis and at moderate levels in heart. In terms of tissue distribution, expressed at a moderate level in brain, the cerebellum, testis, heart and olfactory epithelium. Highly expressed in olfactory epithelium and at very low levels, if any, in other tissues. In the cochlea, expressed in the inner and outer hair cells (at protein level). In the brain, highly expressed in the neurons of the granule layer of the cerebellum, some Purkinje cells, the central amygdaloid nucleus, and the interpolar spinal trigem nucleus and, at moderate levels, in the glomerular and external plexiform layer of the olfactory bulb as well as in parts of the caudate-putamen and olfactory tubercle.

The protein localises to the lysosome. The catalysed reaction is a nucleoside 3',5'-cyclic phosphate + H2O = a nucleoside 5'-phosphate + H(+). The enzyme catalyses 3',5'-cyclic GMP + H2O = GMP + H(+). It carries out the reaction 3',5'-cyclic AMP + H2O = AMP + H(+). Its activity is regulated as follows. Type I PDE are activated by the binding of calmodulin in the presence of Ca(2+). Different splice variants may have different sensitivities to Ca(2+). Exhibits a higher sensitivity to Ca(2+) stimulation than isoforms 1 and 2. Functionally, calmodulin-dependent cyclic nucleotide phosphodiesterase with a dual specificity for cAMP and cGMP, which are key regulators of many important physiological processes. Exhibits high affinity for both cAMP and cGMP. Modulates the amplitude and duration of the cAMP signal in sensory cilia in response to odorant stimulation, hence contributing to the generation of action potentials. Regulates smooth muscle cell proliferation. Regulates the stability of growth factor receptors, including PDGFRB. In Mus musculus (Mouse), this protein is Dual specificity calcium/calmodulin-dependent 3',5'-cyclic nucleotide phosphodiesterase 1C.